Here is a 407-residue protein sequence, read N- to C-terminus: Histidine--tRNA ligase (407 aa).

The protein belongs to the class-II aminoacyl-tRNA synthetase family. In terms of assembly, homodimer.

Its subcellular location is the cytoplasm. It carries out the reaction tRNA(His) + L-histidine + ATP = L-histidyl-tRNA(His) + AMP + diphosphate + H(+). This is Histidine--tRNA ligase from Wolbachia pipientis subsp. Culex pipiens (strain wPip).